Consider the following 561-residue polypeptide: Proline--tRNA ligase (561 aa).

It belongs to the class-II aminoacyl-tRNA synthetase family. ProS type 1 subfamily. As to quaternary structure, homodimer.

The protein localises to the cytoplasm. It catalyses the reaction tRNA(Pro) + L-proline + ATP = L-prolyl-tRNA(Pro) + AMP + diphosphate. In terms of biological role, catalyzes the attachment of proline to tRNA(Pro) in a two-step reaction: proline is first activated by ATP to form Pro-AMP and then transferred to the acceptor end of tRNA(Pro). As ProRS can inadvertently accommodate and process non-cognate amino acids such as alanine and cysteine, to avoid such errors it has two additional distinct editing activities against alanine. One activity is designated as 'pretransfer' editing and involves the tRNA(Pro)-independent hydrolysis of activated Ala-AMP. The other activity is designated 'posttransfer' editing and involves deacylation of mischarged Ala-tRNA(Pro). The misacylated Cys-tRNA(Pro) is not edited by ProRS. In Thermosipho africanus (strain TCF52B), this protein is Proline--tRNA ligase.